Consider the following 79-residue polypeptide: CDC42 small effector protein 1 (79 aa).

2 S-palmitoyl cysteine lipidation sites follow: Cys10 and Cys11. A CRIB domain is found at 30 to 43; it reads IGEPMNFVHLTHIG. Residues 48-79 are disordered; the sequence is GAGDGLAMTGAVQEQMRSKGNRDRPWSNSRAL. The segment covering 63 to 72 has biased composition (basic and acidic residues); that stretch reads MRSKGNRDRP.

It belongs to the CDC42SE/SPEC family. As to quaternary structure, interacts with CDC42 (in GTP-bound form). Interacts weakly with RAC1 and not at all with RHOA.

The protein localises to the cytoplasm. It localises to the cytoskeleton. The protein resides in the cell membrane. Its function is as follows. Probably involved in the organization of the actin cytoskeleton by acting downstream of CDC42, inducing actin filament assembly. Alters CDC42-induced cell shape changes. In activated T-cells, may play a role in CDC42-mediated F-actin accumulation at the immunological synapse. May play a role in early contractile events in phagocytosis in macrophages. The protein is CDC42 small effector protein 1 (Cdc42se1) of Rattus norvegicus (Rat).